We begin with the raw amino-acid sequence, 215 residues long: Adenylate kinase (215 aa).

10 to 15 serves as a coordination point for ATP; the sequence is GAGKGT. An NMP region spans residues 30–59; it reads STGDMFRKAIKEETELGKEAKSYMDRGELV. AMP is bound by residues Thr-31, Arg-36, 57–59, 85–88, and Gln-92; these read ELV and GFPR. Residues 126–163 are LID; that stretch reads GRRICESCGTTYHLVFNPPKVEGICDIDGGKLYQREDD. Arg-127 contributes to the ATP binding site. Cys-130 and Cys-133 together coordinate Zn(2+). 136 to 137 is an ATP binding site; it reads TY. The Zn(2+) site is built by Cys-150 and Asp-153. Positions 160 and 171 each coordinate AMP. Residue Lys-199 participates in ATP binding.

Belongs to the adenylate kinase family. Monomer.

The protein resides in the cytoplasm. The enzyme catalyses AMP + ATP = 2 ADP. It functions in the pathway purine metabolism; AMP biosynthesis via salvage pathway; AMP from ADP: step 1/1. Catalyzes the reversible transfer of the terminal phosphate group between ATP and AMP. Plays an important role in cellular energy homeostasis and in adenine nucleotide metabolism. This chain is Adenylate kinase, found in Staphylococcus aureus (strain COL).